The following is a 256-amino-acid chain: 5-keto-4-deoxy-D-glucarate aldolase (256 aa).

Catalysis depends on H50, which acts as the Proton acceptor. Q151 contributes to the substrate binding site. E153 lines the Mg(2+) pocket. Substrate is bound by residues S178 and D179. D179 contacts Mg(2+).

The protein belongs to the HpcH/HpaI aldolase family. KDGluc aldolase subfamily. In terms of assembly, homohexamer; trimer of dimers. Requires Mg(2+) as cofactor.

It catalyses the reaction 5-dehydro-4-deoxy-D-glucarate = 2-hydroxy-3-oxopropanoate + pyruvate. The enzyme catalyses 2-dehydro-3-deoxy-D-glucarate = 2-hydroxy-3-oxopropanoate + pyruvate. The protein operates within carbohydrate acid metabolism; galactarate degradation; D-glycerate from galactarate: step 2/3. Its function is as follows. Catalyzes the reversible retro-aldol cleavage of both 5-keto-4-deoxy-D-glucarate and 2-keto-3-deoxy-D-glucarate to pyruvate and tartronic semialdehyde. The chain is 5-keto-4-deoxy-D-glucarate aldolase from Escherichia coli O157:H7 (strain EC4115 / EHEC).